Here is a 720-residue protein sequence, read N- to C-terminus: DNA gyrase subunit B (720 aa).

The span at methionine 1–proline 26 shows a compositional bias: low complexity. The interval methionine 1–proline 42 is disordered. The 115-residue stretch at cysteine 498–proline 612 folds into the Toprim domain. Glutamate 504, aspartate 577, and aspartate 579 together coordinate Mg(2+).

This sequence belongs to the type II topoisomerase GyrB family. Heterotetramer, composed of two GyrA and two GyrB chains. In the heterotetramer, GyrA contains the active site tyrosine that forms a transient covalent intermediate with the DNA, while GyrB binds cofactors and catalyzes ATP hydrolysis. Mg(2+) serves as cofactor. It depends on Mn(2+) as a cofactor. Ca(2+) is required as a cofactor.

It localises to the cytoplasm. It carries out the reaction ATP-dependent breakage, passage and rejoining of double-stranded DNA.. Its activity is regulated as follows. Supercoiling activity inhibited by novobiocin and coumermycin, DNA wrapping around gyrase is not inhibited. In terms of biological role, a type II topoisomerase that negatively supercoils DNA in an ATP-dependent manner. About 140 bp of DNA wraps around gyrase in the presence or absence of ATP, when ATP is added negative supercoils are made. A type II topoisomerase that negatively supercoils closed circular double-stranded (ds) DNA in an ATP-dependent manner to modulate DNA topology and maintain chromosomes in an underwound state. Negative supercoiling favors strand separation, and DNA replication, transcription, recombination and repair, all of which involve strand separation. Also able to catalyze the interconversion of other topological isomers of dsDNA rings, including catenanes and knotted rings. Type II topoisomerases break and join 2 DNA strands simultaneously in an ATP-dependent manner. The polypeptide is DNA gyrase subunit B (Micrococcus luteus (strain ATCC 4698 / DSM 20030 / JCM 1464 / CCM 169 / CCUG 5858 / IAM 1056 / NBRC 3333 / NCIMB 9278 / NCTC 2665 / VKM Ac-2230) (Micrococcus lysodeikticus)).